A 157-amino-acid chain; its full sequence is Probable succinate transporter subunit YjjB (157 aa).

4 helical membrane-spanning segments follow: residues 6–26 (IILTLIEDMILAAIPAVGFAM), 51–71 (VLMISGMNIEWASFCAAILVG), 87–107 (VFTVAAIIPMFPGINAYVAMI), and 129–149 (FLKASFIVGALSIGLSLPGLW).

This sequence belongs to the ThrE exporter (TC 2.A.79) family. The transporter is composed of YjjB and YjjP.

It localises to the cell inner membrane. Its function is as follows. Involved in succinate export with YjjP. Both proteins are required for export. This Proteus mirabilis (strain HI4320) protein is Probable succinate transporter subunit YjjB.